The sequence spans 210 residues: CKLF-like MARVEL transmembrane domain-containing protein 2B (210 aa).

Transmembrane regions (helical) follow at residues 35 to 55 (FWAQ…IAAM), 65 to 85 (PIVI…FFLY), 103 to 123 (LMND…ALEA), and 127 to 147 (LPVP…ISII). The region spanning 35–157 (FWAQGHAECK…DLCLQRRQFK (123 aa)) is the MARVEL domain.

This sequence belongs to the chemokine-like factor family.

The protein resides in the membrane. In Mus musculus (Mouse), this protein is CKLF-like MARVEL transmembrane domain-containing protein 2B (Cmtm2b).